Here is a 791-residue protein sequence, read N- to C-terminus: Ubiquitin carboxyl-terminal hydrolase 10-A (791 aa).

2 stretches are compositionally biased toward polar residues: residues 118–139 (FSES…SGTG) and 270–284 (DTTE…QTLE). Disordered stretches follow at residues 118 to 156 (FSES…YYSY) and 270 to 291 (DTTE…EDTA). Residues 408-788 (RGLINKGNWC…TAYLLYYRRV (381 aa)) form the USP domain. The Nucleophile role is filled by C417. Residues 560-580 (EVNKEEQEGSDEEWEQVGPRN) form a disordered region. Residue H742 is the Proton acceptor of the active site.

Belongs to the peptidase C19 family. USP10 subfamily.

The protein localises to the cytoplasm. The protein resides in the nucleus. The enzyme catalyses Thiol-dependent hydrolysis of ester, thioester, amide, peptide and isopeptide bonds formed by the C-terminal Gly of ubiquitin (a 76-residue protein attached to proteins as an intracellular targeting signal).. Hydrolase that can remove conjugated ubiquitin from target proteins such as p53/tp53, rps2/us5, rps3/us3, rps10/eS10, becn1, snx3 and cftr. Acts as an essential regulator of p53/tp53 stability: in unstressed cells, specifically deubiquitinates p53/tp53 in the cytoplasm, leading to counteracts MDM2 action and stabilize p53/tp53. Following DNA damage, translocates to the nucleus and deubiquitinates p53/tp53, leading to regulate the p53/TP53-dependent DNA damage response. Component of a regulatory loop that controls autophagy and p53/tp53 levels. Plays a key role in 40S ribosome subunit recycling when a ribosome has stalled during translation: acts both by inhibiting formation of stress granules, which store stalled translation pre-initiation complexes, and mediating deubiquitination of 40S ribosome subunits. Deubiquitinates cftr in early endosomes, enhancing its endocytic recycling. In Xenopus laevis (African clawed frog), this protein is Ubiquitin carboxyl-terminal hydrolase 10-A (usp10-a).